A 386-amino-acid polypeptide reads, in one-letter code: 2-isopropylmalate synthase (386 aa).

Residues 12-265 (VRIFDTTLRD…DVGVRTYLLY (254 aa)) enclose the Pyruvate carboxyltransferase domain. Residues aspartate 21, histidine 203, histidine 205, and asparagine 239 each coordinate a divalent metal cation.

The protein belongs to the alpha-IPM synthase/homocitrate synthase family. As to quaternary structure, homodimer. A divalent metal cation is required as a cofactor.

It catalyses the reaction 3-methyl-2-oxobutanoate + acetyl-CoA + H2O = (2S)-2-isopropylmalate + CoA + H(+). It participates in amino-acid biosynthesis; L-leucine biosynthesis; L-leucine from 3-methyl-2-oxobutanoate: step 1/4. Its activity is regulated as follows. Is not inhibited by leucine. Catalyzes the condensation of the acetyl group of acetyl-CoA with 3-methyl-2-oxobutanoate (2-oxoisovalerate) to form 3-carboxy-3-hydroxy-4-methylpentanoate (2-isopropylmalate). Carries out the first step of the leucine biosynthesis pathway. Also displays a low citramalate synthase activity, using pyruvate as substrate, but is unable to use 2-oxoglutarate. This is 2-isopropylmalate synthase from Sulfolobus acidocaldarius (strain ATCC 33909 / DSM 639 / JCM 8929 / NBRC 15157 / NCIMB 11770).